Consider the following 140-residue polypeptide: Large ribosomal subunit protein uL14 (140 aa).

Belongs to the universal ribosomal protein uL14 family. Component of the large ribosomal subunit.

It is found in the cytoplasm. Its function is as follows. Component of the large ribosomal subunit. The ribosome is a large ribonucleoprotein complex responsible for the synthesis of proteins in the cell. The chain is Large ribosomal subunit protein uL14 (rpl23) from Danio rerio (Zebrafish).